The following is a 489-amino-acid chain: Putative general secretion pathway protein A (489 aa).

ATP is bound at residue 26 to 33; the sequence is GEAGSGKT. Residues 237-257 traverse the membrane as a helical segment; sequence MQLAVVMSGTIIALTCGWLLL.

Belongs to the ExeA family.

It is found in the cell membrane. Its function is as follows. May play a regulatory role under conditions of derepressed gsp gene expression. This chain is Putative general secretion pathway protein A (gspA), found in Escherichia coli (strain K12).